Reading from the N-terminus, the 148-residue chain is UPF0756 membrane protein YeaL (148 aa).

The next 4 helical transmembrane spans lie at 14 to 34 (ALGF…LIIV), 51 to 71 (LTVG…SGTL), 86 to 106 (LVAI…VALM), and 121 to 141 (VLGV…AGLV).

The protein belongs to the UPF0756 family.

The protein localises to the cell membrane. The polypeptide is UPF0756 membrane protein YeaL (Salmonella arizonae (strain ATCC BAA-731 / CDC346-86 / RSK2980)).